The primary structure comprises 305 residues: UDP-N-acetylenolpyruvoylglucosamine reductase 2 (305 aa).

One can recognise an FAD-binding PCMH-type domain in the interval 33–197 (VGGKADVFVA…LEARFELEEG (165 aa)). Arginine 176 is a catalytic residue. Serine 226 functions as the Proton donor in the catalytic mechanism. Glutamate 296 is an active-site residue.

The protein belongs to the MurB family. FAD is required as a cofactor.

The protein localises to the cytoplasm. The catalysed reaction is UDP-N-acetyl-alpha-D-muramate + NADP(+) = UDP-N-acetyl-3-O-(1-carboxyvinyl)-alpha-D-glucosamine + NADPH + H(+). It functions in the pathway cell wall biogenesis; peptidoglycan biosynthesis. Cell wall formation. In Bacillus cereus (strain ATCC 10987 / NRS 248), this protein is UDP-N-acetylenolpyruvoylglucosamine reductase 2.